The following is a 308-amino-acid chain: RING-H2 finger protein ATL63 (308 aa).

Residues 29–49 traverse the membrane as a helical segment; that stretch reads VLLAALVFLLLVVLFVLLLHF. Residues 138 to 180 form an RING-type; atypical zinc finger; that stretch reads CVICLGLWEAGDFGRKLRNCGHGFHVECIDMWLSSHSTCPLCR. A disordered region spans residues 252-308; sequence VFDDDEEINDGGTRSDRRRSMSMTSSASSSLMRMLSSSSSRSERNKVFPTARQDSSK. The segment covering 272–291 has biased composition (low complexity); it reads MSMTSSASSSLMRMLSSSSS.

The protein belongs to the RING-type zinc finger family. ATL subfamily.

It is found in the membrane. It carries out the reaction S-ubiquitinyl-[E2 ubiquitin-conjugating enzyme]-L-cysteine + [acceptor protein]-L-lysine = [E2 ubiquitin-conjugating enzyme]-L-cysteine + N(6)-ubiquitinyl-[acceptor protein]-L-lysine.. The protein operates within protein modification; protein ubiquitination. This chain is RING-H2 finger protein ATL63 (ATL63), found in Arabidopsis thaliana (Mouse-ear cress).